A 46-amino-acid polypeptide reads, in one-letter code: Defensin-1 (46 aa).

4 disulfides stabilise this stretch: Cys-3–Cys-46, Cys-14–Cys-35, Cys-20–Cys-40, and Cys-24–Cys-42.

It belongs to the DEFL family. As to expression, epidermis and vascular bundles of pods, stems, roots, leaves and wet or dry seeds.

Functionally, possesses antifungal activity sensitive to inorganic cations. The polypeptide is Defensin-1 (Pisum sativum (Garden pea)).